A 308-amino-acid polypeptide reads, in one-letter code: UDP-3-O-acyl-N-acetylglucosamine deacetylase (308 aa).

Zn(2+)-binding residues include H78, H235, and D239. H262 acts as the Proton donor in catalysis.

Belongs to the LpxC family. Zn(2+) is required as a cofactor.

It catalyses the reaction a UDP-3-O-[(3R)-3-hydroxyacyl]-N-acetyl-alpha-D-glucosamine + H2O = a UDP-3-O-[(3R)-3-hydroxyacyl]-alpha-D-glucosamine + acetate. Its pathway is glycolipid biosynthesis; lipid IV(A) biosynthesis; lipid IV(A) from (3R)-3-hydroxytetradecanoyl-[acyl-carrier-protein] and UDP-N-acetyl-alpha-D-glucosamine: step 2/6. Catalyzes the hydrolysis of UDP-3-O-myristoyl-N-acetylglucosamine to form UDP-3-O-myristoylglucosamine and acetate, the committed step in lipid A biosynthesis. The protein is UDP-3-O-acyl-N-acetylglucosamine deacetylase of Anaeromyxobacter dehalogenans (strain 2CP-C).